The sequence spans 597 residues: DNA mismatch repair protein MutL (597 aa).

It belongs to the DNA mismatch repair MutL/HexB family.

This protein is involved in the repair of mismatches in DNA. It is required for dam-dependent methyl-directed DNA mismatch repair. May act as a 'molecular matchmaker', a protein that promotes the formation of a stable complex between two or more DNA-binding proteins in an ATP-dependent manner without itself being part of a final effector complex. In Rhodopseudomonas palustris (strain BisB5), this protein is DNA mismatch repair protein MutL.